Here is a 251-residue protein sequence, read N- to C-terminus: Small ribosomal subunit protein uS2B (251 aa).

The residue at position 2 (Ser-2) is an N-acetylserine. Over residues 214–225 (AVEEASATGATE) the composition is skewed to low complexity. The segment at 214–251 (AVEEASATGATEEATEEATEETTEATEWAEDNTENATW) is disordered. The span at 226–251 (EATEEATEETTEATEWAEDNTENATW) shows a compositional bias: acidic residues.

Belongs to the universal ribosomal protein uS2 family. In terms of assembly, component of the small ribosomal subunit. Mature ribosomes consist of a small (40S) and a large (60S) subunit. The 40S subunit contains about 33 different proteins and 1 molecule of RNA (18S). The 60S subunit contains about 49 different proteins and 3 molecules of RNA (25S, 5.8S and 5S). Interacts with RPS21.

The protein resides in the cytoplasm. Its function is as follows. Required for the assembly and/or stability of the 40S ribosomal subunit. Required for the processing of the 20S rRNA-precursor to mature 18S rRNA in a late step of the maturation of 40S ribosomal subunits. The chain is Small ribosomal subunit protein uS2B from Vanderwaltozyma polyspora (strain ATCC 22028 / DSM 70294 / BCRC 21397 / CBS 2163 / NBRC 10782 / NRRL Y-8283 / UCD 57-17) (Kluyveromyces polysporus).